The primary structure comprises 127 residues: Phosphoribosyl-AMP cyclohydrolase (127 aa).

Residue Asp96 participates in Mg(2+) binding. Position 97 (Cys97) interacts with Zn(2+). Mg(2+)-binding residues include Asp98 and Asp100. 2 residues coordinate Zn(2+): Cys113 and Cys120.

The protein belongs to the PRA-CH family. Homodimer. Requires Mg(2+) as cofactor. Zn(2+) is required as a cofactor.

It is found in the cytoplasm. The catalysed reaction is 1-(5-phospho-beta-D-ribosyl)-5'-AMP + H2O = 1-(5-phospho-beta-D-ribosyl)-5-[(5-phospho-beta-D-ribosylamino)methylideneamino]imidazole-4-carboxamide. It participates in amino-acid biosynthesis; L-histidine biosynthesis; L-histidine from 5-phospho-alpha-D-ribose 1-diphosphate: step 3/9. Functionally, catalyzes the hydrolysis of the adenine ring of phosphoribosyl-AMP. The polypeptide is Phosphoribosyl-AMP cyclohydrolase (Corynebacterium jeikeium (strain K411)).